The chain runs to 256 residues: Type III pantothenate kinase (256 aa).

D6–V13 lines the ATP pocket. G107 to I110 provides a ligand contact to substrate. D109 acts as the Proton acceptor in catalysis. Residue D129 coordinates K(+). An ATP-binding site is contributed by T132. T184 lines the substrate pocket.

This sequence belongs to the type III pantothenate kinase family. As to quaternary structure, homodimer. NH4(+) serves as cofactor. K(+) is required as a cofactor.

The protein resides in the cytoplasm. It carries out the reaction (R)-pantothenate + ATP = (R)-4'-phosphopantothenate + ADP + H(+). It participates in cofactor biosynthesis; coenzyme A biosynthesis; CoA from (R)-pantothenate: step 1/5. In terms of biological role, catalyzes the phosphorylation of pantothenate (Pan), the first step in CoA biosynthesis. This Bifidobacterium longum (strain DJO10A) protein is Type III pantothenate kinase.